Reading from the N-terminus, the 123-residue chain is Non-specific lipid-transfer protein (123 aa).

Residues 1 to 25 (MAVKKMVEAVFVVGLVVTMMNVWGA) form the signal peptide. 4 disulfides stabilise this stretch: Cys-34–Cys-82, Cys-44–Cys-59, Cys-60–Cys-104, and Cys-80–Cys-119.

The protein belongs to the plant LTP family.

In terms of biological role, plant non-specific lipid-transfer proteins transfer phospholipids as well as galactolipids across membranes. May play a role in wax or cutin deposition in the cell walls of expanding epidermal cells and certain secretory tissues. This is Non-specific lipid-transfer protein from Pinus taeda (Loblolly pine).